Reading from the N-terminus, the 153-residue chain is Ubiquitin/ISG15-conjugating enzyme E2 L6 (153 aa).

The UBC core domain maps to 2 to 149; that stretch reads MASKRVAKEL…AEEFTLKFGV (148 aa). The active-site Glycyl thioester intermediate is Cys-86.

This sequence belongs to the ubiquitin-conjugating enzyme family. Interacts with RNF19A, RNF19B and RNF144B. Interacts with FLT3 (tyrosine phosphorylated). ISGylated.

The catalysed reaction is S-ubiquitinyl-[E1 ubiquitin-activating enzyme]-L-cysteine + [E2 ubiquitin-conjugating enzyme]-L-cysteine = [E1 ubiquitin-activating enzyme]-L-cysteine + S-ubiquitinyl-[E2 ubiquitin-conjugating enzyme]-L-cysteine.. It participates in protein modification; protein ubiquitination. In terms of biological role, catalyzes the covalent attachment of ubiquitin or ISG15 to other proteins. Functions in the E6/E6-AP-induced ubiquitination of p53/TP53. Promotes ubiquitination and subsequent proteasomal degradation of FLT3. This chain is Ubiquitin/ISG15-conjugating enzyme E2 L6 (Ube2l6), found in Mus musculus (Mouse).